A 225-amino-acid polypeptide reads, in one-letter code: Non-structural protein V (225 aa).

Residues 65–72 are nuclear localization signal; the sequence is PVKPRRKK. The segment covering 145-157 has biased composition (polar residues); it reads SNEPVSSAGSAQD. The interval 145 to 173 is disordered; it reads SNEPVSSAGSAQDPNFKRGGANRERARGN. 8 residues coordinate Zn(2+): His174, Cys193, Cys197, Cys209, Cys211, Cys214, Cys218, and Cys221.

It belongs to the paramyxoviruses V protein family. In terms of assembly, interacts with host IFIH1/MDA5 and DHX58/LGP2. Forms with host DDB1, CUL4A, STAT1 and STAT2 the HPIV2 virus V-dependent complex (VDC); this complex targets host STAT2 to proteasomal degradation.

The protein localises to the host nucleus. Plays an essential role in the inhibition of host immune response. Prevents the establishment of cellular antiviral state by blocking interferon-alpha/beta (IFN-alpha/beta) production and signaling pathway. Interacts with host IFIH1/MDA5 and DHX58/LGP2 to inhibit the transduction pathway involved in the activation of IFN-beta promoter, thus protecting the virus against cell antiviral state. Efficiently blocks type I IFN signaling following infection by targeting host STAT2 for proteasomal degradation. Also plays a role in viral growth by promoting host RhoA-induced F-actin formation. This Homo sapiens (Human) protein is Non-structural protein V (P/V).